Consider the following 523-residue polypeptide: Probable E3 ubiquitin-protein ligase ZFP1 (523 aa).

The segment covering 18–28 has biased composition (basic and acidic residues); the sequence is EQGHSHIHSES. Positions 18 to 43 are disordered; the sequence is EQGHSHIHSESFNRTGNDSSDQGAQH. A compositionally biased stretch (polar residues) spans 29–40; it reads FNRTGNDSSDQG. The segment at 471 to 512 adopts an RING-type; atypical zinc-finger fold; sequence CIICQEEYQVKECIGTLDCGHRYHEDCIKQWLMVKNLCPICK.

It belongs to the RING-type zinc finger family. In terms of assembly, interacts with DJA6.

The catalysed reaction is S-ubiquitinyl-[E2 ubiquitin-conjugating enzyme]-L-cysteine + [acceptor protein]-L-lysine = [E2 ubiquitin-conjugating enzyme]-L-cysteine + N(6)-ubiquitinyl-[acceptor protein]-L-lysine.. It functions in the pathway protein modification; protein ubiquitination. Its function is as follows. Probable E3 ubiquitin-protein ligase. This is Probable E3 ubiquitin-protein ligase ZFP1 from Oryza sativa subsp. japonica (Rice).